Consider the following 141-residue polypeptide: Galactose-6-phosphate isomerase subunit LacA 1 (141 aa).

It belongs to the LacAB/RpiB family. Heteromultimeric protein consisting of LacA and LacB.

It carries out the reaction aldehydo-D-galactose 6-phosphate = keto-D-tagatose 6-phosphate. The protein operates within carbohydrate metabolism; D-galactose 6-phosphate degradation; D-tagatose 6-phosphate from D-galactose 6-phosphate: step 1/1. This chain is Galactose-6-phosphate isomerase subunit LacA 1, found in Streptococcus pyogenes serotype M3 (strain SSI-1).